Reading from the N-terminus, the 316-residue chain is GTP cyclohydrolase FolE2 1 (316 aa).

It belongs to the GTP cyclohydrolase IV family.

The catalysed reaction is GTP + H2O = 7,8-dihydroneopterin 3'-triphosphate + formate + H(+). It participates in cofactor biosynthesis; 7,8-dihydroneopterin triphosphate biosynthesis; 7,8-dihydroneopterin triphosphate from GTP: step 1/1. In terms of biological role, converts GTP to 7,8-dihydroneopterin triphosphate. In Burkholderia lata (strain ATCC 17760 / DSM 23089 / LMG 22485 / NCIMB 9086 / R18194 / 383), this protein is GTP cyclohydrolase FolE2 1.